A 168-amino-acid polypeptide reads, in one-letter code: Nuclear cap-binding protein subunit 2 (168 aa).

MRNA-binding positions include tyrosine 23, tyrosine 46, 115–119, 126–130, and 136–137; these read RTDWD, RQYGR, and QV. The RRM domain occupies 43-121; that stretch reads STLYVGNLSF…RIVRTDWDAG (79 aa).

The protein belongs to the RRM NCBP2 family. Component of the nuclear cap-binding complex (CBC), a heterodimer composed of NCBP1/CBP80 and NCBP2/CBP20 that interacts with m7GpppG-capped RNA.

The protein localises to the nucleus. Its subcellular location is the cytoplasm. Component of the cap-binding complex (CBC), which binds co-transcriptionally to the 5' cap of pre-mRNAs and is involved in various processes such as pre-mRNA splicing, translation regulation, nonsense-mediated mRNA decay, RNA-mediated gene silencing (RNAi) by microRNAs (miRNAs) and mRNA export. The CBC complex is involved in mRNA export from the nucleus, leading to the recruitment of the mRNA export machinery to the 5' end of mRNA and to mRNA export in a 5' to 3' direction through the nuclear pore. The CBC complex is also involved in mediating U snRNA and intronless mRNAs export from the nucleus. The CBC complex is essential for a pioneer round of mRNA translation, before steady state translation when the CBC complex is replaced by cytoplasmic cap-binding protein eIF4E. The pioneer round of mRNA translation mediated by the CBC complex plays a central role in nonsense-mediated mRNA decay (NMD), NMD only taking place in mRNAs bound to the CBC complex, but not on eIF4E-bound mRNAs. The CBC complex enhances NMD in mRNAs containing at least one exon-junction complex (EJC), promoting the interaction between UPF1 and UPF2. The CBC complex is also involved in 'failsafe' NMD, which is independent of the EJC complex, while it does not participate in Staufen-mediated mRNA decay (SMD). During cell proliferation, the CBC complex is also involved in microRNAs (miRNAs) biogenesis via its interaction with SRRT/ARS2, thereby being required for miRNA-mediated RNA interference. The CBC complex also acts as a negative regulator of PARN, thereby acting as an inhibitor of mRNA deadenylation. In the CBC complex, NCBP2/CBP20 recognizes and binds capped RNAs (m7GpppG-capped RNA) but requires NCBP1/CBP80 to stabilize the movement of its N-terminal loop and lock the CBC into a high affinity cap-binding state with the cap structure. The conventional cap-binding complex with NCBP2 binds both small nuclear RNA (snRNA) and messenger (mRNA) and is involved in their export from the nucleus. This is Nuclear cap-binding protein subunit 2 (NCBP2) from Gallus gallus (Chicken).